A 297-amino-acid chain; its full sequence is Ribosomal protein L11 methyltransferase (297 aa).

4 residues coordinate S-adenosyl-L-methionine: T139, G164, D186, and N233.

It belongs to the methyltransferase superfamily. PrmA family.

The protein resides in the cytoplasm. It carries out the reaction L-lysyl-[protein] + 3 S-adenosyl-L-methionine = N(6),N(6),N(6)-trimethyl-L-lysyl-[protein] + 3 S-adenosyl-L-homocysteine + 3 H(+). Methylates ribosomal protein L11. This is Ribosomal protein L11 methyltransferase from Trichodesmium erythraeum (strain IMS101).